The primary structure comprises 836 residues: Serine/threonine-protein kinase 1 (836 aa).

The span at 1-12 (MDHNSPKSRRSR) shows a compositional bias: basic residues. Residues 1-244 (MDHNSPKSRR…SLPDSITRED (244 aa)) are disordered. A compositionally biased stretch (basic and acidic residues) spans 28-40 (SDSDSDQGRDRDK). 3 stretches are compositionally biased toward acidic residues: residues 64–75 (DGEGEEDDDDDS), 95–105 (DYDDDDGDESG), and 145–163 (EESS…DDGD). A compositionally biased stretch (polar residues) spans 224-238 (MQQQNSKMSTTSLPD). Residues 249 to 503 (YEFLNELGKG…AAEMLKHKFV (255 aa)) enclose the Protein kinase domain. ATP contacts are provided by residues 255–263 (LGKGSYGSV) and lysine 278. Aspartate 371 serves as the catalytic Proton acceptor. Disordered regions lie at residues 539-571 (LEDT…APLT), 600-640 (EDET…DSWI), and 760-780 (TSSD…PLPP). Over residues 562-571 (PQNSTEAPLT) the composition is skewed to polar residues. Basic and acidic residues predominate over residues 606 to 618 (SDSRSQLVREKES).

This sequence belongs to the protein kinase superfamily. STE Ser/Thr protein kinase family. STE20 subfamily. In terms of assembly, interacts with MOB1A and MOB1B via its N-terminal region at the plasma membrane and in the nucleus. Binds to BIK1 to phosphorylate and stabilize it. Interacts with and phosphorylates RBOHD upon flagellin perception to activate it. The cofactor is Mn(2+). Autophosphorylates. As to expression, mostly expressed in mature tissues of roots, shoots, hypocotyls, cotyledons, stems, leaves and flowers, as well as in the shoot apical meristem (SAM).

The protein resides in the cell membrane. The protein localises to the nucleus. It localises to the golgi apparatus. It is found in the trans-Golgi network. Its subcellular location is the early endosome. It catalyses the reaction L-seryl-[protein] + ATP = O-phospho-L-seryl-[protein] + ADP + H(+). It carries out the reaction L-threonyl-[protein] + ATP = O-phospho-L-threonyl-[protein] + ADP + H(+). Functionally, serine/threonine-protein kinase. Regulates organ size in coordination with MOB1A by modulating cell proliferation and cell expansion, possibly by facilitating cell cycle exit. Positive regulator of the pathogen-associated molecular pattern (PAMP, e.g. flg22)-triggered immunity (PTI) signaling by stabilizing BIK1 and activating RBOHD by phosphorylation to promote the extracellular reactive oxygen species (ROS) burst involved in defense responses to bacterial infection. This chain is Serine/threonine-protein kinase 1, found in Arabidopsis thaliana (Mouse-ear cress).